The primary structure comprises 179 residues: Large ribosomal subunit protein uL5 (179 aa).

It belongs to the universal ribosomal protein uL5 family. As to quaternary structure, part of the 50S ribosomal subunit; part of the 5S rRNA/L5/L18/L25 subcomplex. Contacts the 5S rRNA and the P site tRNA. Forms a bridge to the 30S subunit in the 70S ribosome.

Functionally, this is one of the proteins that bind and probably mediate the attachment of the 5S RNA into the large ribosomal subunit, where it forms part of the central protuberance. In the 70S ribosome it contacts protein S13 of the 30S subunit (bridge B1b), connecting the 2 subunits; this bridge is implicated in subunit movement. Contacts the P site tRNA; the 5S rRNA and some of its associated proteins might help stabilize positioning of ribosome-bound tRNAs. The polypeptide is Large ribosomal subunit protein uL5 (Neisseria meningitidis serogroup C (strain 053442)).